The primary structure comprises 290 residues: Potassium-transporting ATPase subunit beta (290 aa).

Residues 1-36 are Cytoplasmic-facing; that stretch reads MAALQEKKSCSQRMEEFQRYCWNPDTGQMLGRTLSR. A helical; Signal-anchor for type II membrane protein membrane pass occupies residues 37–57; the sequence is WVWISLYYVAFYVVMTGIFAL. Residues 58-290 lie on the Extracellular side of the membrane; sequence CIYTLMCTLD…KVEFKLTIQQ (233 aa). Residues asparagine 99, asparagine 103, asparagine 130, asparagine 146, and asparagine 161 are each glycosylated (N-linked (GlcNAc...) asparagine). A disulfide bond links cysteine 131 and cysteine 152. The cysteines at positions 162 and 178 are disulfide-linked. N-linked (GlcNAc...) asparagine glycosylation is found at asparagine 193 and asparagine 221. Positions 194 to 290 are immunoglobulin-like; the sequence is STAPRADCTF…KVEFKLTIQQ (97 aa). Cysteine 201 and cysteine 262 are oxidised to a cystine.

This sequence belongs to the X(+)/potassium ATPases subunit beta family. The ATPase pump is composed of two subunits: alpha (catalytic) and beta (regulatory). Interacts with alpha subunit ATP12A; this interaction is required for the formation of a functionally active pump and targeting at the plasma membrane. Interacts (via N-terminus) with alpha subunit ATP4A (via the P-domain). N-glycosylation is necessary for assembly and functional expression of the pump at the plasma membrane.

It is found in the apical cell membrane. The protein resides in the cell membrane. The beta subunit of the gastric H(+)/K(+) ATPase pump which transports H(+) ions in exchange for K(+) ions across the apical membrane of parietal cells. Plays a structural and regulatory role in the assembly and membrane targeting of a functionally active pump. Within a transport cycle, the transfer of a H(+) ion across the membrane is coupled to ATP hydrolysis and is associated with a transient phosphorylation of the alpha subunit that shifts the pump conformation from inward-facing (E1) to outward-facing state (E2). Interacts with the phosphorylation domain of the alpha subunit and functions as a ratchet, stabilizing the lumenal-open E2 conformation and preventing the reverse reaction of the transport cycle. The polypeptide is Potassium-transporting ATPase subunit beta (ATP4B) (Canis lupus familiaris (Dog)).